A 130-amino-acid chain; its full sequence is Small ribosomal subunit protein uS8 (130 aa).

This sequence belongs to the universal ribosomal protein uS8 family. Component of the 40S ribosomal subunit. Part of the small subunit (SSU) processome, composed of more than 70 proteins and the RNA chaperone small nucleolar RNA (snoRNA) U3.

Its subcellular location is the cytoplasm. The protein resides in the nucleus. It localises to the nucleolus. Component of the small ribosomal subunit. Part of the small subunit (SSU) processome, first precursor of the small eukaryotic ribosomal subunit. During the assembly of the SSU processome in the nucleolus, many ribosome biogenesis factors, an RNA chaperone and ribosomal proteins associate with the nascent pre-rRNA and work in concert to generate RNA folding, modifications, rearrangements and cleavage as well as targeted degradation of pre-ribosomal RNA by the RNA exosome. Required for erythropoiesis during embryonic development. This chain is Small ribosomal subunit protein uS8, found in Danio rerio (Zebrafish).